A 255-amino-acid polypeptide reads, in one-letter code: Tryptophan synthase alpha chain (255 aa).

Active-site proton acceptor residues include glutamate 49 and aspartate 60.

The protein belongs to the TrpA family. Tetramer of two alpha and two beta chains.

It carries out the reaction (1S,2R)-1-C-(indol-3-yl)glycerol 3-phosphate + L-serine = D-glyceraldehyde 3-phosphate + L-tryptophan + H2O. The protein operates within amino-acid biosynthesis; L-tryptophan biosynthesis; L-tryptophan from chorismate: step 5/5. The alpha subunit is responsible for the aldol cleavage of indoleglycerol phosphate to indole and glyceraldehyde 3-phosphate. This is Tryptophan synthase alpha chain from Desulfovibrio desulfuricans (strain ATCC 27774 / DSM 6949 / MB).